Consider the following 208-residue polypeptide: Large ribosomal subunit protein uL3 (208 aa).

A disordered region spans residues 134-153 (SKFHREAGSTGQCTSPGRTF).

The protein belongs to the universal ribosomal protein uL3 family. In terms of assembly, part of the 50S ribosomal subunit. Forms a cluster with proteins L14 and L19.

One of the primary rRNA binding proteins, it binds directly near the 3'-end of the 23S rRNA, where it nucleates assembly of the 50S subunit. The chain is Large ribosomal subunit protein uL3 from Treponema pallidum (strain Nichols).